A 767-amino-acid chain; its full sequence is GPI ethanolamine phosphate transferase 2 (767 aa).

N-linked (GlcNAc...) asparagine glycans are attached at residues asparagine 186 and asparagine 401. Transmembrane regions (helical) follow at residues 407 to 427 (LGLF…YGLG) and 434 to 454 (VTFL…SSYV). Residue asparagine 490 is glycosylated (N-linked (GlcNAc...) asparagine). Transmembrane regions (helical) follow at residues 513 to 533 (ILWA…CLNS), 538 to 558 (IWRS…LVFV), and 595 to 615 (IPIF…KMSA). An N-linked (GlcNAc...) asparagine glycan is attached at asparagine 627. The next 3 helical transmembrane spans lie at 655-675 (SVVL…IWWA), 695-715 (TLLT…CTML), and 733-755 (LAWT…SQVL).

It belongs to the PIGG/PIGN/PIGO family. PIGG subfamily.

It localises to the endoplasmic reticulum membrane. It functions in the pathway glycolipid biosynthesis; glycosylphosphatidylinositol-anchor biosynthesis. Functionally, ethanolamine phosphate transferase involved in glycosylphosphatidylinositol-anchor biosynthesis. Transfers ethanolamine phosphate to the GPI second mannose. This Aspergillus fumigatus (strain ATCC MYA-4609 / CBS 101355 / FGSC A1100 / Af293) (Neosartorya fumigata) protein is GPI ethanolamine phosphate transferase 2 (las21).